A 51-amino-acid chain; its full sequence is Toxin CSTX-18 (51 aa).

Disulfide bonds link cysteine 9-cysteine 22, cysteine 14-cysteine 27, cysteine 21-cysteine 36, and cysteine 29-cysteine 34.

Contains 4 disulfide bonds. Expressed by the venom gland.

It is found in the secreted. This Cupiennius salei (American wandering spider) protein is Toxin CSTX-18.